The chain runs to 149 residues: Large ribosomal subunit protein bL9 (149 aa).

This sequence belongs to the bacterial ribosomal protein bL9 family.

Functionally, binds to the 23S rRNA. This is Large ribosomal subunit protein bL9 from Legionella pneumophila subsp. pneumophila (strain Philadelphia 1 / ATCC 33152 / DSM 7513).